Reading from the N-terminus, the 174-residue chain is Guided entry of tail-anchored proteins factor 1 (174 aa).

Residues 1 to 8 (MSASETDR) lie on the Lumenal side of the membrane. The helical transmembrane segment at 9 to 29 (WAWLLVLSFVFGCNLLRILLP) threads the bilayer. The Cytoplasmic portion of the chain corresponds to 30–99 (SLSSFISRVL…VKARTAQLAK (70 aa)). Positions 39–94 (LQKDAEQESQMRAEIQGMKQELSTVNMMDEFARYARLERKINKMTDKLKTHVKART) form a coiled coil. Residues 39-97 (LQKDAEQESQMRAEIQGMKQELSTVNMMDEFARYARLERKINKMTDKLKTHVKARTAQL) form an interaction with GET3/TRC40 region. The chain crosses the membrane as a helical span at residues 100–120 (IKWFISVAFYILQAALMISLI). Over 121–148 (WKYYSVPVAVVPSKWITPLDRLVAFPTR) the chain is Lumenal. The chain crosses the membrane as a helical span at residues 149 to 169 (VAGGIGITCWILVCNKVVAIV). The Cytoplasmic segment spans residues 170-174 (LHPFS).

The protein belongs to the WRB/GET1 family. In terms of assembly, component of the Golgi to ER traffic (GET) complex, which is composed of GET1, CAMLG/GET2 and GET3. Within the complex, GET1 and CAMLG form a heterotetramer which is stabilized by phosphatidylinositol binding and which binds to the GET3 homodimer. Interacts with CAMLG/GET2 (via C-terminus). GET3 shows a higher affinity for CAMLG than for GET1.

Its subcellular location is the endoplasmic reticulum membrane. Functionally, required for the post-translational delivery of tail-anchored (TA) proteins to the endoplasmic reticulum. Together with CAMLG/GET2, acts as a membrane receptor for soluble GET3/TRC40, which recognizes and selectively binds the transmembrane domain of TA proteins in the cytosol. Required to ensure correct topology and ER insertion of CAMLG. The sequence is that of Guided entry of tail-anchored proteins factor 1 from Mus musculus (Mouse).